Reading from the N-terminus, the 149-residue chain is Protein FAM72A (149 aa).

It belongs to the FAM72 family. As to quaternary structure, interacts with UNG. As to expression, may be up-regulated in malignant colon cancers, compared to normal colon and colon adenomas. Expression is also elevated in other common cancer types, including breast, lung, uterus, and ovary.

Its subcellular location is the cytoplasm. The protein resides in the mitochondrion. In terms of biological role, may play a role in the regulation of cellular reactive oxygen species metabolism. May participate in cell growth regulation. In Homo sapiens (Human), this protein is Protein FAM72A (FAM72A).